A 478-amino-acid polypeptide reads, in one-letter code: 3-isopropylmalate dehydratase large subunit (478 aa).

[4Fe-4S] cluster contacts are provided by cysteine 359, cysteine 417, and cysteine 420.

This sequence belongs to the aconitase/IPM isomerase family. LeuC type 1 subfamily. Heterodimer of LeuC and LeuD. It depends on [4Fe-4S] cluster as a cofactor.

The catalysed reaction is (2R,3S)-3-isopropylmalate = (2S)-2-isopropylmalate. Its pathway is amino-acid biosynthesis; L-leucine biosynthesis; L-leucine from 3-methyl-2-oxobutanoate: step 2/4. Its function is as follows. Catalyzes the isomerization between 2-isopropylmalate and 3-isopropylmalate, via the formation of 2-isopropylmaleate. The chain is 3-isopropylmalate dehydratase large subunit from Anaeromyxobacter sp. (strain Fw109-5).